A 364-amino-acid polypeptide reads, in one-letter code: MKSFLLLFCLAQLCSCRSIPLDPIAGYKEPACDDPDTEQAALAAVDYINKHLPRGYKHTLNQIDSVKVWPRRPTGEVYDIEIDTLETTCHVLDPTPLVNCSVRQQTEHAVEGDCDIHVLKQDGQFSVLFTKCDSSPDSAEDVRKLCPDCPLLAPLNNSQVVHAAEVALATFNAQNNGSYFQLVEISRAQFVPLPGSVSVEFAVAATDCIAKEVVDPTKCNLLAEKQYGFCKGSVIQKALGGEDVTVTCTLFQTQPVIPQPQPEGAEAGAPSAVPDAAVPDAAVPAPSAAGLPVGSVVAGPSVVAVPLPLHRAHYDLRHTFSGVASVESASGEAFHVGKTPIVGQPSVPGGPVHLCPGRIRYFKI.

Positions 1-15 (MKSFLLLFCLAQLCS) form a signal peptide, or 17. Positions 27 to 133 (YKEPACDDPD…QFSVLFTKCD (107 aa)) constitute a Cystatin fetuin-A-type 1 domain. 6 cysteine pairs are disulfide-bonded: Cys-32-Cys-355, Cys-89-Cys-100, Cys-114-Cys-132, Cys-146-Cys-149, Cys-208-Cys-219, and Cys-230-Cys-248. Residue Asn-99 is glycosylated (N-linked (GlcNAc...) asparagine). Phosphoserine occurs at positions 134, 135, and 138. Residues 144–256 (KLCPDCPLLA…TCTLFQTQPV (113 aa)) enclose the Cystatin fetuin-A-type 2 domain. N-linked (GlcNAc...) asparagine glycans are attached at residues Asn-156 and Asn-176. O-linked (GalNAc...) serine glycosylation occurs at Ser-301. A Phosphothreonine modification is found at Thr-319. A phosphoserine mark is found at Ser-321, Ser-325, Ser-328, and Ser-330. O-linked (GalNAc...) threonine glycosylation is present at Thr-339.

Belongs to the fetuin family. Phosphorylated by FAM20C in the extracellular medium.

It is found in the secreted. This chain is Alpha-2-HS-glycoprotein (AHSG), found in Ovis aries (Sheep).